We begin with the raw amino-acid sequence, 368 residues long: Protein mab-21-like (368 aa).

This sequence belongs to the mab-21 family.

This Drosophila melanogaster (Fruit fly) protein is Protein mab-21-like.